A 566-amino-acid chain; its full sequence is Cyclin-dependent kinase-like 2 (566 aa).

The Protein kinase domain maps to Tyr4–Phe287. Residues Val10 to Val18 and Lys33 contribute to the ATP site. The [NKR]KIAxRE motif lies at Lys45–Glu51. The Proton acceptor role is filled by Asp126. 2 disordered regions span residues Asp307–Arg334 and Gln545–His566. Over residues Arg320 to Arg334 the composition is skewed to basic and acidic residues.

It belongs to the protein kinase superfamily. CMGC Ser/Thr protein kinase family. CDC2/CDKX subfamily.

It localises to the cytoplasm. It is found in the nucleus. It catalyses the reaction L-seryl-[protein] + ATP = O-phospho-L-seryl-[protein] + ADP + H(+). The enzyme catalyses L-threonyl-[protein] + ATP = O-phospho-L-threonyl-[protein] + ADP + H(+). The chain is Cyclin-dependent kinase-like 2 from Oryctolagus cuniculus (Rabbit).